A 432-amino-acid chain; its full sequence is Glutamyl-tRNA reductase (432 aa).

Substrate-binding positions include 50–53, Ser110, 115–117, and Gln121; these read TCNR and ETQ. The active-site Nucleophile is Cys51. 190–195 lines the NADP(+) pocket; the sequence is GVGEMS.

This sequence belongs to the glutamyl-tRNA reductase family. In terms of assembly, homodimer.

The catalysed reaction is (S)-4-amino-5-oxopentanoate + tRNA(Glu) + NADP(+) = L-glutamyl-tRNA(Glu) + NADPH + H(+). Its pathway is porphyrin-containing compound metabolism; protoporphyrin-IX biosynthesis; 5-aminolevulinate from L-glutamyl-tRNA(Glu): step 1/2. In terms of biological role, catalyzes the NADPH-dependent reduction of glutamyl-tRNA(Glu) to glutamate 1-semialdehyde (GSA). This is Glutamyl-tRNA reductase from Sulfurimonas denitrificans (strain ATCC 33889 / DSM 1251) (Thiomicrospira denitrificans (strain ATCC 33889 / DSM 1251)).